The following is an 85-amino-acid chain: Large ribosomal subunit protein bL27 (85 aa).

Positions 1 to 21 (MAHKKAGGSTRNGRDSNAQRL) are disordered. Residues 9 to 19 (STRNGRDSNAQ) are compositionally biased toward polar residues.

The protein belongs to the bacterial ribosomal protein bL27 family.

This Pectobacterium carotovorum subsp. carotovorum (strain PC1) protein is Large ribosomal subunit protein bL27.